A 90-amino-acid polypeptide reads, in one-letter code: MSLEKDKSTVINNYKLHESDTGSADVQIALLTDRINQLIEHLKLHKQDHHSRRGLLKLVGRRRRLLAYLSKKDNARFRAVSERLGLRIKA.

This sequence belongs to the universal ribosomal protein uS15 family. In terms of assembly, part of the 30S ribosomal subunit. Forms a bridge to the 50S subunit in the 70S ribosome, contacting the 23S rRNA.

Functionally, one of the primary rRNA binding proteins, it binds directly to 16S rRNA where it helps nucleate assembly of the platform of the 30S subunit by binding and bridging several RNA helices of the 16S rRNA. In terms of biological role, forms an intersubunit bridge (bridge B4) with the 23S rRNA of the 50S subunit in the ribosome. The polypeptide is Small ribosomal subunit protein uS15 (Herpetosiphon aurantiacus (strain ATCC 23779 / DSM 785 / 114-95)).